Reading from the N-terminus, the 218-residue chain is Twisted gastrulation protein homolog 1-B (218 aa).

A signal peptide spans M1 to C25. N52, N81, and N147 each carry an N-linked (GlcNAc...) asparagine glycan.

Belongs to the twisted gastrulation protein family. In terms of assembly, binds directly to bmp2, bmp4 and bmp7 and can form a ternary complex with bmps and chordin, thus preventing the binding of bmps to their cell surface receptors.

Its subcellular location is the secreted. Its function is as follows. Involved in dorsal-ventral patterning, permitting peak BMP signaling by antagonizing the residual anti-BMP activity of the cleavage products of chrd. Functions to promote the formation of ventral mesoderm by increasing the activity of bmp7 and other BMPS. Seems to antagonize BMP signaling by forming ternary complexes with chrd and BMPs, thereby preventing BMPs from binding to their receptors. In addition to the anti-BMP function, also has pro-BMP activity, partly mediated by cleavage and degradation of chrd, which releases BMPs from ternary complexes. May be an important modulator of BMP-regulated cartilage development and chondrocyte differentiation. This Xenopus laevis (African clawed frog) protein is Twisted gastrulation protein homolog 1-B (twsg1-b).